Consider the following 350-residue polypeptide: MAEKLRVGIVGASGYGGVQLVRLLLDHPRVEIAYLGANQNAGTPFGELYPQLAHRIDRVCEAVELDRIVEACSVVFLATPNGIAHTLAPGLLAGGLRVFDLSADYRFVNLETYQSWYGGDRHDAAVAREAVYGLPELYRERIRTARLVGCPGCYPTASLLAAAPLLKQGLIDPRSLIIDAKSGVSGAGRALKTGSLFAEADSSVAAYSVARHRHIPEIEQVCSDLAGMRVQVQFTPHLIPMARGMLVTLYAQLRDPGLVSEDMLTIYEAFYRQAPAVRVLGSGIYPQTKWASGTNTCFIGLEVDQRTERVVVLSALDNLVKGQSGQAIQAMNLTQGWEEMLGLPAIGFYP.

The active site involves Cys-153.

It belongs to the NAGSA dehydrogenase family. Type 1 subfamily.

Its subcellular location is the cytoplasm. It catalyses the reaction N-acetyl-L-glutamate 5-semialdehyde + phosphate + NADP(+) = N-acetyl-L-glutamyl 5-phosphate + NADPH + H(+). The protein operates within amino-acid biosynthesis; L-arginine biosynthesis; N(2)-acetyl-L-ornithine from L-glutamate: step 3/4. Functionally, catalyzes the NADPH-dependent reduction of N-acetyl-5-glutamyl phosphate to yield N-acetyl-L-glutamate 5-semialdehyde. The protein is N-acetyl-gamma-glutamyl-phosphate reductase of Gloeobacter violaceus (strain ATCC 29082 / PCC 7421).